Here is a 377-residue protein sequence, read N- to C-terminus: Formate dehydrogenase, mitochondrial (377 aa).

A mitochondrion-targeting transit peptide spans 1 to 29 (MAAMWRAAARQLVDRAVGSRAAHTSAGSK). 2 residues coordinate substrate: I121 and N145. Residues T146, D220, 255–259 (PLTEK), N281, D307, and 331–334 (HISG) contribute to the NAD(+) site.

The protein belongs to the D-isomer specific 2-hydroxyacid dehydrogenase family. FDH subfamily. As to quaternary structure, homodimer.

Its subcellular location is the mitochondrion. It carries out the reaction formate + NAD(+) = CO2 + NADH. Functionally, catalyzes the NAD(+)-dependent oxidation of formate to carbon dioxide. Involved in the cell stress response. This chain is Formate dehydrogenase, mitochondrial, found in Hordeum vulgare (Barley).